Here is a 409-residue protein sequence, read N- to C-terminus: Casein kinase I isoform delta-B (409 aa).

Residues 9–277 (YRLGRKIGSG…YLRQLFRNLF (269 aa)) form the Protein kinase domain. ATP is bound by residues 15-23 (IGSGSFGDI) and Lys38. Asp128 functions as the Proton acceptor in the catalytic mechanism. A compositionally biased stretch (basic and acidic residues) spans 300–315 (TAEEADRERRERDERM). Residues 300–409 (TAEEADRERR…NSIPFDHHGK (110 aa)) form a disordered region. Residues 317-341 (HSRNPAARGIPAASGRPRPTQDGAP) are autoinhibitory. Polar residues-rich tracts occupy residues 346-358 (TPTS…SSPR) and 380-402 (NVSS…QNSI).

It belongs to the protein kinase superfamily. Monomer. Interacts with per1 and per2. Component of the circadian core oscillator. Autophosphorylated on serine and threonine residues.

Its subcellular location is the cytoplasm. The protein localises to the nucleus. The enzyme catalyses L-seryl-[protein] + ATP = O-phospho-L-seryl-[protein] + ADP + H(+). It carries out the reaction L-threonyl-[protein] + ATP = O-phospho-L-threonyl-[protein] + ADP + H(+). Its activity is regulated as follows. Exhibits substrate-dependent heparin activation. Casein kinases are operationally defined by their preferential utilization of acidic proteins such as caseins as substrates. Central component of the circadian clock. May act as a negative regulator of circadian rhythmicity by phosphorylating per1 and per2, which may lead to their degradation. Participates in wnt signaling. This is Casein kinase I isoform delta-B (csnk1db) from Danio rerio (Zebrafish).